The following is a 423-amino-acid chain: Serine hydroxymethyltransferase (423 aa).

121 to 123 (GHI) is a binding site for (6S)-5,6,7,8-tetrahydrofolate. Position 227 is an N6-(pyridoxal phosphate)lysine (K227). E242 provides a ligand contact to (6S)-5,6,7,8-tetrahydrofolate.

Belongs to the SHMT family. As to quaternary structure, homodimer. Requires pyridoxal 5'-phosphate as cofactor.

The protein localises to the cytoplasm. It catalyses the reaction 5,10-methylenetetrahydromethanopterin + glycine + H2O = 5,6,7,8-tetrahydromethanopterin + L-serine. It participates in amino-acid biosynthesis; glycine biosynthesis; glycine from L-serine: step 1/1. In terms of biological role, catalyzes the reversible interconversion of serine and glycine with tetrahydromethanopterin (H4MPT) serving as the one-carbon carrier. Cannot use tetrahydrofolate (THF or H4PteGlu) instead of H4MPT as the pteridine substrate. Also probably exhibits a pteridine-independent aldolase activity toward beta-hydroxyamino acids, producing glycine and aldehydes, via a retro-aldol mechanism. In Methanothermobacter thermautotrophicus (strain ATCC 29096 / DSM 1053 / JCM 10044 / NBRC 100330 / Delta H) (Methanobacterium thermoautotrophicum), this protein is Serine hydroxymethyltransferase.